Reading from the N-terminus, the 473-residue chain is Catalase easC (473 aa).

Low complexity predominate over residues 1–15; it reads MASEVSVASSGSEHS. Residues 1 to 31 form a disordered region; the sequence is MASEVSVASSGSEHSGAQKCPFQDPGLSSMD. The active site involves H54. Y344 provides a ligand contact to heme. Residues 352–389 are disordered; that stretch reads LGPNNLDLPANRTKKLADGSRPEKAEMAPQKVPSQEHA. A compositionally biased stretch (basic and acidic residues) spans 366–377; sequence KLADGSRPEKAE.

The protein belongs to the catalase family. The cofactor is heme.

Its pathway is alkaloid biosynthesis; ergot alkaloid biosynthesis. Catalase; part of the gene cluster that mediates the biosynthesis of fungal ergot alkaloid. DmaW catalyzes the first step of ergot alkaloid biosynthesis by condensing dimethylallyl diphosphate (DMAP) and tryptophan to form 4-dimethylallyl-L-tryptophan. The second step is catalyzed by the methyltransferase easF that methylates 4-dimethylallyl-L-tryptophan in the presence of S-adenosyl-L-methionine, resulting in the formation of 4-dimethylallyl-L-abrine. The catalase easC and the FAD-dependent oxidoreductase easE then transform 4-dimethylallyl-L-abrine to chanoclavine-I which is further oxidized by easD in the presence of NAD(+), resulting in the formation of chanoclavine-I aldehyde. Agroclavine dehydrogenase easG then mediates the conversion of chanoclavine-I aldehyde to agroclavine via a non-enzymatic adduct reaction: the substrate is an iminium intermediate that is formed spontaneously from chanoclavine-I aldehyde in the presence of glutathione. The presence of easA is not required to complete this reaction. Further conversion of agroclavine to paspalic acid is a two-step process involving oxidation of agroclavine to elymoclavine and of elymoclavine to paspalic acid, the second step being performed by the elymoclavine oxidase cloA. Paspalic acid is then further converted to D-lysergic acid. Ergopeptines are assembled from D-lysergic acid and three different amino acids by the D-lysergyl-peptide-synthetases composed each of a monomudular and a trimodular nonribosomal peptide synthetase subunit. LpsB and lpsC encode the monomodular subunits responsible for D-lysergic acid activation and incorporation into the ergopeptine backbone. LpsA1 and A2 subunits encode the trimodular nonribosomal peptide synthetase assembling the tripeptide portion of ergopeptines. LpsA1 is responsible for formation of the major ergopeptine, ergotamine, and lpsA2 for alpha-ergocryptine, the minor ergopeptine of the total alkaloid mixture elaborated by C.purpurea. D-lysergyl-tripeptides are assembled by the nonribosomal peptide synthetases and released as N-(D-lysergyl-aminoacyl)-lactams. Cyclolization of the D-lysergyl-tripeptides is performed by the Fe(2+)/2-ketoglutarate-dependent dioxygenase easH which introduces a hydroxyl group into N-(D-lysergyl-aminoacyl)-lactam at alpha-C of the aminoacyl residue followed by spontaneous condensation with the terminal lactam carbonyl group. The sequence is that of Catalase easC from Claviceps purpurea (strain 20.1) (Ergot fungus).